The sequence spans 303 residues: Glucose-1-phosphate thymidylyltransferase (303 aa).

Mg(2+) contacts are provided by Asp-108 and Asp-222.

The protein belongs to the glucose-1-phosphate thymidylyltransferase family. Requires Mg(2+) as cofactor.

It catalyses the reaction dTTP + alpha-D-glucose 1-phosphate + H(+) = dTDP-alpha-D-glucose + diphosphate. Functionally, catalyzes the formation of dTDP-glucose, from dTTP and glucose 1-phosphate, as well as its pyrophosphorolysis. Probably involved in the biosynthesis of the acarviose moiety of the alpha-glucosidase inhibitor acarbose. This chain is Glucose-1-phosphate thymidylyltransferase (acbA), found in Actinoplanes sp. (strain ATCC 31044 / CBS 674.73 / SE50/110).